We begin with the raw amino-acid sequence, 409 residues long: Thiaminase-1 (409 aa).

Residues 1 to 29 (MSKVKGFIYKPLMVMLALLLVVVSPAGAG) form the signal peptide. Cys143 serves as the catalytic Nucleophile. Catalysis depends on Glu271, which acts as the Proton acceptor.

Monomer.

It localises to the secreted. The enzyme catalyses pyridine + thiamine = heteropyrithiamine + 5-(2-hydroxyethyl)-4-methylthiazole. Degrades thiamine by replacing its thiazole moiety with a wide range of nucleophiles. The protein is Thiaminase-1 of Paenibacillus thiaminolyticus (Bacillus thiaminolyticus).